We begin with the raw amino-acid sequence, 1303 residues long: DNA-directed RNA polymerase subunit beta'' (1303 aa).

4 residues coordinate Zn(2+): cysteine 225, cysteine 299, cysteine 306, and cysteine 309.

Belongs to the RNA polymerase beta' chain family. RpoC2 subfamily. In plastids the minimal PEP RNA polymerase catalytic core is composed of four subunits: alpha, beta, beta', and beta''. When a (nuclear-encoded) sigma factor is associated with the core the holoenzyme is formed, which can initiate transcription. Zn(2+) serves as cofactor.

The protein resides in the plastid. It is found in the chloroplast. The catalysed reaction is RNA(n) + a ribonucleoside 5'-triphosphate = RNA(n+1) + diphosphate. DNA-dependent RNA polymerase catalyzes the transcription of DNA into RNA using the four ribonucleoside triphosphates as substrates. This chain is DNA-directed RNA polymerase subunit beta'', found in Rhodomonas salina (Cryptomonas salina).